A 252-amino-acid polypeptide reads, in one-letter code: Triosephosphate isomerase (252 aa).

Residue asparagine 10 to lysine 12 coordinates substrate. The active-site Electrophile is histidine 96. The active-site Proton acceptor is glutamate 168. Substrate is bound by residues glycine 174, serine 214, and glycine 235–glycine 236.

The protein belongs to the triosephosphate isomerase family. Homodimer.

It localises to the cytoplasm. The catalysed reaction is D-glyceraldehyde 3-phosphate = dihydroxyacetone phosphate. It participates in carbohydrate biosynthesis; gluconeogenesis. It functions in the pathway carbohydrate degradation; glycolysis; D-glyceraldehyde 3-phosphate from glycerone phosphate: step 1/1. Its function is as follows. Involved in the gluconeogenesis. Catalyzes stereospecifically the conversion of dihydroxyacetone phosphate (DHAP) to D-glyceraldehyde-3-phosphate (G3P). This is Triosephosphate isomerase from Streptococcus gordonii (strain Challis / ATCC 35105 / BCRC 15272 / CH1 / DL1 / V288).